Reading from the N-terminus, the 97-residue chain is Aspartyl/glutamyl-tRNA(Asn/Gln) amidotransferase subunit C (97 aa).

This sequence belongs to the GatC family. As to quaternary structure, heterotrimer of A, B and C subunits.

The catalysed reaction is L-glutamyl-tRNA(Gln) + L-glutamine + ATP + H2O = L-glutaminyl-tRNA(Gln) + L-glutamate + ADP + phosphate + H(+). It carries out the reaction L-aspartyl-tRNA(Asn) + L-glutamine + ATP + H2O = L-asparaginyl-tRNA(Asn) + L-glutamate + ADP + phosphate + 2 H(+). Allows the formation of correctly charged Asn-tRNA(Asn) or Gln-tRNA(Gln) through the transamidation of misacylated Asp-tRNA(Asn) or Glu-tRNA(Gln) in organisms which lack either or both of asparaginyl-tRNA or glutaminyl-tRNA synthetases. The reaction takes place in the presence of glutamine and ATP through an activated phospho-Asp-tRNA(Asn) or phospho-Glu-tRNA(Gln). The sequence is that of Aspartyl/glutamyl-tRNA(Asn/Gln) amidotransferase subunit C from Sulfolobus acidocaldarius (strain ATCC 33909 / DSM 639 / JCM 8929 / NBRC 15157 / NCIMB 11770).